Here is a 154-residue protein sequence, read N- to C-terminus: Low molecular weight protein-tyrosine-phosphatase PtpA (154 aa).

Catalysis depends on Cys8, which acts as the Nucleophile. Arg14 is an active-site residue. Asp120 acts as the Proton donor in catalysis.

This sequence belongs to the low molecular weight phosphotyrosine protein phosphatase family.

It carries out the reaction O-phospho-L-tyrosyl-[protein] + H2O = L-tyrosyl-[protein] + phosphate. Its function is as follows. Dephosphorylates the phosphotyrosine-containing proteins. The chain is Low molecular weight protein-tyrosine-phosphatase PtpA (ptpA) from Staphylococcus epidermidis (strain ATCC 35984 / DSM 28319 / BCRC 17069 / CCUG 31568 / BM 3577 / RP62A).